The chain runs to 286 residues: 4-hydroxybenzoate octaprenyltransferase (286 aa).

Helical transmembrane passes span 21–40, 95–115, 142–162, 167–187, 211–231, 235–255, and 266–286; these read GTLLLMWPCLMALMLAAGGM, ILFVVLGLSAFGLVLLLNGLV, FLGVVWSWSIPMAYAAQTGEV, WWLFAANWFWTVAYDTMYAMV, IIGLFQIAALVCFIAAGWSAE, LYGLGLLTFVGFSTYQQMLIF, and FLNNNWAGLALFVGLGADYLI.

Belongs to the UbiA prenyltransferase family. It depends on Mg(2+) as a cofactor.

The protein resides in the cell inner membrane. It catalyses the reaction all-trans-octaprenyl diphosphate + 4-hydroxybenzoate = 4-hydroxy-3-(all-trans-octaprenyl)benzoate + diphosphate. Its pathway is cofactor biosynthesis; ubiquinone biosynthesis. Catalyzes the prenylation of para-hydroxybenzoate (PHB) with an all-trans polyprenyl group. Mediates the second step in the final reaction sequence of ubiquinone-8 (UQ-8) biosynthesis, which is the condensation of the polyisoprenoid side chain with PHB, generating the first membrane-bound Q intermediate 3-octaprenyl-4-hydroxybenzoate. The protein is 4-hydroxybenzoate octaprenyltransferase of Shewanella putrefaciens (strain CN-32 / ATCC BAA-453).